A 489-amino-acid chain; its full sequence is Carboxyl-terminal-processing peptidase 1, chloroplastic (489 aa).

The segment covering 1–20 has biased composition (low complexity); that stretch reads MRLLLPFSSPLSATSSPSTP. The tract at residues 1–27 is disordered; that stretch reads MRLLLPFSSPLSATSSPSTPQFIPELP. The PDZ domain occupies 189-273; that stretch reads FSRMSKYDIT…TFVVLKVKHG (85 aa). Active-site charge relay system residues include S403 and K428.

Belongs to the peptidase S41A family.

The protein localises to the plastid. Its subcellular location is the chloroplast thylakoid lumen. The catalysed reaction is The enzyme shows specific recognition of a C-terminal tripeptide, Xaa-Yaa-Zaa, in which Xaa is preferably Ala or Leu, Yaa is preferably Ala or Tyr, and Zaa is preferably Ala, but then cleaves at a variable distance from the C-terminus. A typical cleavage is -Ala-Ala-|-Arg-Ala-Ala-Lys-Glu-Asn-Tyr-Ala-Leu-Ala-Ala.. In terms of biological role, protease involved in the C-terminal processing of the chloroplastic D1 protein of photosystem II. This proteolytic processing is necessary to allow the light-driven assembly of the tetranuclear manganese cluster, which is responsible for photosynthetic water oxidation. This chain is Carboxyl-terminal-processing peptidase 1, chloroplastic (CTPA1), found in Arabidopsis thaliana (Mouse-ear cress).